The sequence spans 291 residues: Meiosis-specific protein SPO13 (291 aa).

Disordered stretches follow at residues 1–30 (MAPR…QEKT), 116–143 (SFDN…QSSQ), and 271–291 (CSDY…SSLN). Positions 3–6 (PRKR) match the Nuclear localization signal motif. Basic and acidic residues predominate over residues 116–125 (SFDNSLRFED). Over residues 130–143 (PKSTSTPVLSQSSQ) the composition is skewed to polar residues.

Its subcellular location is the nucleus. Required for meiosis I segmentation. Probably acts as a regulator of kinetochore function during meiosis I: required both for mono-orientation of kinetochores on sister chromosomes and protection of centromeric cohesin from separase-mediated cleavage. This chain is Meiosis-specific protein SPO13 (SPO13), found in Saccharomyces cerevisiae (strain ATCC 204508 / S288c) (Baker's yeast).